A 105-amino-acid polypeptide reads, in one-letter code: Nitrogen fixation nifHD region GlnB-like protein 1 (105 aa).

The protein belongs to the P(II) protein family.

Functionally, could be involved in the regulation of nitrogen fixation. The sequence is that of Nitrogen fixation nifHD region GlnB-like protein 1 (glnBA) from Methanothermococcus thermolithotrophicus (Methanococcus thermolithotrophicus).